We begin with the raw amino-acid sequence, 837 residues long: V-type proton ATPase 116 kDa subunit a 1 (837 aa).

The Cytoplasmic segment spans residues M1 to E388. The chain crosses the membrane as a helical span at residues I389–F407. At G408–D409 the chain is on the vacuolar side. A helical transmembrane segment spans residues F410–R426. Topologically, residues E427–T441 are cytoplasmic. Residues M442–A471 form a helical membrane-spanning segment. Over L472 to S534 the chain is Vacuolar. A helical membrane pass occupies residues F535–L554. The Cytoplasmic segment spans residues S555 to F572. A helical transmembrane segment spans residues I573–K593. The Vacuolar portion of the chain corresponds to W594 to F638. The helical transmembrane segment at L639–L658 threads the bilayer. Over R659 to T724 the chain is Cytoplasmic. Residues I725–A749 form a helical membrane-spanning segment. Residues Q750–G770 lie on the Vacuolar side of the membrane. Residues G771–E809 traverse the membrane as a helical segment. Residues F810–E837 are Cytoplasmic-facing.

This sequence belongs to the V-ATPase 116 kDa subunit family. In terms of assembly, V-ATPase is a heteromultimeric enzyme made up of two complexes: the ATP-hydrolytic V1 complex and the proton translocation V0 complex. The V1 complex consists of three catalytic AB heterodimers that form a heterohexamer, three peripheral stalks each consisting of EG heterodimers, one central rotor including subunits D and F, and the regulatory subunits C and H. The proton translocation complex V0 consists of the proton transport subunit a, a ring of proteolipid subunits c9c'', rotary subunit d, subunits e and f, and two accessory subunits.

Its subcellular location is the cytoplasmic vesicle. It localises to the clathrin-coated vesicle membrane. The protein localises to the secretory vesicle. The protein resides in the synaptic vesicle membrane. It is found in the melanosome. Subunit of the V0 complex of vacuolar(H+)-ATPase (V-ATPase), a multisubunit enzyme composed of a peripheral complex (V1) that hydrolyzes ATP and a membrane integral complex (V0) that translocates protons. V-ATPase is responsible for acidifying and maintaining the pH of intracellular compartments and in some cell types, is targeted to the plasma membrane, where it is responsible for acidifying the extracellular environment. Required for assembly and activity of the vacuolar ATPase. This Xenopus tropicalis (Western clawed frog) protein is V-type proton ATPase 116 kDa subunit a 1 (atp6v0a1).